The sequence spans 164 residues: Pathogenesis-related protein PRB1-2 (164 aa).

An N-terminal signal peptide occupies residues Met-1 to Ala-24. The residue at position 25 (Gln-25) is a Pyrrolidone carboxylic acid. One can recognise an SCP domain in the interval Pro-34 to Tyr-152. Cystine bridges form between Cys-68–Cys-140, Cys-113–Cys-119, and Cys-135–Cys-150.

It belongs to the CRISP family.

Functionally, probably involved in the defense reaction of plants against pathogens. The chain is Pathogenesis-related protein PRB1-2 from Hordeum vulgare (Barley).